Here is a 413-residue protein sequence, read N- to C-terminus: Clusterin-associated protein 1 (413 aa).

Positions 185-308 form a coiled coil; sequence MRIAIKDLLA…KEEEKRLLKS (124 aa). Positions 303-413 are disordered; that stretch reads KRLLKSGSND…EPLDESDNDF (111 aa). 2 stretches are compositionally biased toward acidic residues: residues 312–328 and 360–388; these read DDSD…DSEL and DSDE…EDES. Phosphoserine occurs at positions 314, 324, and 326. The residue at position 409 (Ser-409) is a Phosphoserine.

It belongs to the CLUAP1 family. Interacts with CLU/clusterin. Interacts with UBXN10; the interaction is direct. Expressed in all tissues tested including heart, kidney, skeletal muscle, eye, liver, ovary, oviduct, testes, lung and brain. Elevated levels in multiciliated cells such as the bronchioles of the lungs, ependymal cells of the brain and cells with a single primary cilia of heart and kidney.

Its subcellular location is the cell projection. The protein localises to the cilium. The protein resides in the nucleus. Functionally, required for cilia biogenesis. Appears to function within the multiple intraflagellar transport complex B (IFT-B). Key regulator of hedgehog signaling. This is Clusterin-associated protein 1 (Cluap1) from Mus musculus (Mouse).